A 639-amino-acid polypeptide reads, in one-letter code: Eukaryotic translation initiation factor 2-alpha kinase 2 (639 aa).

Positions 171-588 (FEEYSLLGRG…LEVLNCGLLL (418 aa)) constitute a Protein kinase domain. Residues 177–185 (LGRGGFGSV) and K200 each bind ATP. Positions 298-320 (ISTSRKSSYSSTTESSNFENLES) are enriched in low complexity. The interval 298–322 (ISTSRKSSYSSTTESSNFENLESPR) is disordered. The Proton acceptor role is filled by D417.

This sequence belongs to the protein kinase superfamily. Ser/Thr protein kinase family. GCN2 subfamily. In terms of processing, autophosphorylated.

It carries out the reaction L-seryl-[protein] + ATP = O-phospho-L-seryl-[protein] + ADP + H(+). It catalyses the reaction L-threonyl-[protein] + ATP = O-phospho-L-threonyl-[protein] + ADP + H(+). In terms of biological role, mediates down-regulation of protein synthesis in response to stress conditions by the phosphorylation of the alpha subunit of eIF-2 (tif211) on 'Ser-52'. Protein synthesis is inhibited at the level of initiation. Activity is inhibited in the presence of heme. In Schizosaccharomyces pombe (strain 972 / ATCC 24843) (Fission yeast), this protein is Eukaryotic translation initiation factor 2-alpha kinase 2 (hri2).